The primary structure comprises 200 residues: MNSVGRRGPRRANQNGTRRRRRRTVRPVVVVQPNRAGPRRRNGRRKGRGGANFVFRPTGGTEVFVFSVDNLKANSSGAIKFGPSLSQCPALSDGILKSYHRYKITSIRVEFKSHASANTAGAIFIELDTACKQSALGSYINSFTISKTASKTFRSEAINGKEFQESTIDQFWMLYKANGTTTDTAGQFIITMSVSLMTAK.

Disordered regions lie at residues 1–25 and 33–52; these read MNSV…RRTV and PNRA…GGAN. Residues 37 to 48 are compositionally biased toward basic residues; that stretch reads GPRRRNGRRKGR.

It belongs to the luteoviruses capsid protein family.

The protein localises to the virion. Its function is as follows. Major capsid protein. The polypeptide is Major capsid protein (Avena byzantina (Oat)).